The sequence spans 148 residues: MKVILLEPLENLGDVGQVVDVKPGYARNYLLPRGLAVLATESNLKALEARIRAQAKRLAERKAEAERLKEILENLTLTIPVRAGETKIYGSVTAKDIAEALSRQHGITIDPKRLALEKPIKELGEYVLTYKPHPEVPIQLKVSVVAQE.

Belongs to the bacterial ribosomal protein bL9 family.

Its function is as follows. Binds to the 23S rRNA. The polypeptide is Large ribosomal subunit protein bL9 (Thermus thermophilus (strain ATCC BAA-163 / DSM 7039 / HB27)).